Consider the following 443-residue polypeptide: GTPase Der (443 aa).

2 EngA-type G domains span residues 3–167 and 176–349; these read PVIA…PEEK and IKIA…QSIQ. GTP is bound by residues 9-16, 56-60, 119-122, 182-189, 229-233, and 294-297; these read GRPNVGKS, DTGGL, NKAD, DTAGI, and NKWD. The KH-like domain maps to 350-434; sequence QELTTGQLTR…PVHIKLKTDP (85 aa).

The protein belongs to the TRAFAC class TrmE-Era-EngA-EngB-Septin-like GTPase superfamily. EngA (Der) GTPase family. Associates with the 50S ribosomal subunit.

Its function is as follows. GTPase that plays an essential role in the late steps of ribosome biogenesis. The polypeptide is GTPase Der (Coxiella burnetii (strain CbuK_Q154) (Coxiella burnetii (strain Q154))).